Reading from the N-terminus, the 393-residue chain is MQRAAAASRATAWSTARHGAARVTASASFSGGGGIVAGAALPLRVRGGQLMSLPLLSGGRAVTARVAAAEAPLPADDADAAAGRERGALAETAQLGAMIVAWYLLNIYFNIYNKQVLQPLPFPYTITAFQLAFGSFVIFLMWALKLHPAPRISISQLAKIAPLAAGHMLGTVFTNMSLSKVAVSFTHTIKASEPFFTVLLSAFFLGETPSLLVLGSLVPIVGGVALASLTELSFNWIGFWSAMASNLLYQSRNVLSKKLLGGEEEALDDINLFSILTILSFLLSLPLMLFSEGVKFSPGYLRSTGLNLQELCVRAALAGFCFHGYQKLSYLILARVSPVTHSVANCVKRVVVIVASVLFFRTPISPVNALGTGVALGGVFLYSRLKRTKPKNA.

Residues Met1–Arg65 constitute a chloroplast transit peptide. Transmembrane regions (helical) follow at residues Leu89–Phe109, Tyr124–Leu144, Ala164–Val183, Phe195–Leu217, Leu232–Tyr249, Ile270–Phe290, and Thr362–Tyr382. An EamA domain is found at Pro123–Ser228.

This sequence belongs to the TPT transporter family. PPT (TC 2.A.7.9) subfamily.

The protein localises to the plastid. Its subcellular location is the chloroplast membrane. Functionally, phosphoenolpyruvate/phosphate translocator that transports phosphoenolpyruvate (PEP) and dihydroxyacetone phosphate. The sequence is that of Phosphoenolpyruvate/phosphate translocator 3, chloroplastic (PPT3) from Oryza sativa subsp. japonica (Rice).